We begin with the raw amino-acid sequence, 144 residues long: Large ribosomal subunit protein uL16 (144 aa).

Residues 1 to 19 show a composition bias toward basic residues; the sequence is MLLPKRVKYRRQHRPKTTG. The segment at 1–23 is disordered; the sequence is MLLPKRVKYRRQHRPKTTGRSKG.

The protein belongs to the universal ribosomal protein uL16 family. In terms of assembly, part of the 50S ribosomal subunit.

In terms of biological role, binds 23S rRNA and is also seen to make contacts with the A and possibly P site tRNAs. The protein is Large ribosomal subunit protein uL16 of Staphylococcus epidermidis (strain ATCC 35984 / DSM 28319 / BCRC 17069 / CCUG 31568 / BM 3577 / RP62A).